A 223-amino-acid chain; its full sequence is Small ribosomal subunit protein uS3 (223 aa).

The KH type-2 domain maps to I39–K108.

This sequence belongs to the universal ribosomal protein uS3 family. As to quaternary structure, part of the 30S ribosomal subunit. Forms a tight complex with proteins S10 and S14.

Its function is as follows. Binds the lower part of the 30S subunit head. Binds mRNA in the 70S ribosome, positioning it for translation. This Clostridium botulinum (strain Hall / ATCC 3502 / NCTC 13319 / Type A) protein is Small ribosomal subunit protein uS3.